Here is a 687-residue protein sequence, read N- to C-terminus: E3 ubiquitin-protein ligase RNF19B (687 aa).

The required for ubiquitin ligase activity and for protection against staurosporin-induced cell death stretch occupies residues 1 to 294; it reads MRLRNDCLVR…VCGCEFCWLC (294 aa). Positions 53-88 are disordered; the sequence is RTRAAPEPSVPSPPPSPPPPPPPPVSVPPPPSSPGG. The span at 60 to 85 shows a compositional bias: pro residues; sequence PSVPSPPPSPPPPPPPPVSVPPPPSS. The TRIAD supradomain stretch occupies residues 91–313; the sequence is SLIECPLCLV…LSPSGCTFWG (223 aa). Zn(2+) contacts are provided by cysteine 95, cysteine 98, cysteine 118, cysteine 121, cysteine 182, cysteine 187, cysteine 204, cysteine 209, cysteine 214, cysteine 217, histidine 222, cysteine 227, cysteine 263, and cysteine 266. An RING-type 1 zinc finger spans residues 95–144; it reads CPLCLVRQPPEEIPELLSCRHRSCLRCLRQYLRIEICESRVNLRCPECAE. The segment at 161-227 adopts an IBR-type zinc-finger fold; that stretch reads TRKYEEFLLR…KHVWHPNQTC (67 aa). Residues 263–294 form an RING-type 2; atypical zinc finger; the sequence is CPRCSAYIIKMNDGSCNHMTCSVCGCEFCWLC. The active site involves cysteine 278. Residues cysteine 283, cysteine 286, cysteine 291, cysteine 294, histidine 302, and cysteine 309 each contribute to the Zn(2+) site. 2 helical membrane-spanning segments follow: residues 330-350 and 391-411; these read LIGAPVGISLIAGIAIPAMVI and VVAAVSVGIGVPIMLAYVYGV. The interval 618–662 is disordered; it reads SIRSDLESSDAQSDDVPDLASEEYDSPHLFPPSPSNALQESPPHR. The segment covering 629–641 has biased composition (acidic residues); that stretch reads QSDDVPDLASEEY.

Belongs to the RBR family. RNF19 subfamily. As to quaternary structure, interacts with UBE2L3, UBE2L6 and UCKL1.

It is found in the cytoplasmic granule membrane. The protein localises to the endoplasmic reticulum membrane. It catalyses the reaction [E2 ubiquitin-conjugating enzyme]-S-ubiquitinyl-L-cysteine + [acceptor protein]-L-lysine = [E2 ubiquitin-conjugating enzyme]-L-cysteine + [acceptor protein]-N(6)-ubiquitinyl-L-lysine.. Its pathway is protein modification; protein ubiquitination. In terms of biological role, E3 ubiquitin-protein ligase which accepts ubiquitin from E2 ubiquitin-conjugating enzymes UBE2L3 and UBE2L6 in the form of a thioester and then directly transfers the ubiquitin to targeted substrates, such as UCKL1. Involved in the cytolytic activity of natural killer cells and cytotoxic T-cells. Protects against staurosporin-induced cell death. In Xenopus laevis (African clawed frog), this protein is E3 ubiquitin-protein ligase RNF19B (rnf19b).